A 240-amino-acid polypeptide reads, in one-letter code: 1-(5-phosphoribosyl)-5-[(5-phosphoribosylamino)methylideneamino] imidazole-4-carboxamide isomerase (240 aa).

The active-site Proton acceptor is the D8. Residue D130 is the Proton donor of the active site.

The protein belongs to the HisA/HisF family.

It is found in the cytoplasm. It catalyses the reaction 1-(5-phospho-beta-D-ribosyl)-5-[(5-phospho-beta-D-ribosylamino)methylideneamino]imidazole-4-carboxamide = 5-[(5-phospho-1-deoxy-D-ribulos-1-ylimino)methylamino]-1-(5-phospho-beta-D-ribosyl)imidazole-4-carboxamide. Its pathway is amino-acid biosynthesis; L-histidine biosynthesis; L-histidine from 5-phospho-alpha-D-ribose 1-diphosphate: step 4/9. The polypeptide is 1-(5-phosphoribosyl)-5-[(5-phosphoribosylamino)methylideneamino] imidazole-4-carboxamide isomerase (Elusimicrobium minutum (strain Pei191)).